The following is a 482-amino-acid chain: tRNA sulfurtransferase (482 aa).

Positions 61-165 (LAIRDALTRI…DDRLLLIKGR (105 aa)) constitute a THUMP domain. ATP contacts are provided by residues 183 to 184 (LI), Lys-265, Gly-287, and Gln-296. Residues Cys-344 and Cys-456 are joined by a disulfide bond. The region spanning 404 to 482 (FGPNDVILDI…GFNNVKVYRP (79 aa)) is the Rhodanese domain. Cys-456 (cysteine persulfide intermediate) is an active-site residue.

This sequence belongs to the ThiI family.

The protein localises to the cytoplasm. It catalyses the reaction [ThiI sulfur-carrier protein]-S-sulfanyl-L-cysteine + a uridine in tRNA + 2 reduced [2Fe-2S]-[ferredoxin] + ATP + H(+) = [ThiI sulfur-carrier protein]-L-cysteine + a 4-thiouridine in tRNA + 2 oxidized [2Fe-2S]-[ferredoxin] + AMP + diphosphate. The catalysed reaction is [ThiS sulfur-carrier protein]-C-terminal Gly-Gly-AMP + S-sulfanyl-L-cysteinyl-[cysteine desulfurase] + AH2 = [ThiS sulfur-carrier protein]-C-terminal-Gly-aminoethanethioate + L-cysteinyl-[cysteine desulfurase] + A + AMP + 2 H(+). It participates in cofactor biosynthesis; thiamine diphosphate biosynthesis. Functionally, catalyzes the ATP-dependent transfer of a sulfur to tRNA to produce 4-thiouridine in position 8 of tRNAs, which functions as a near-UV photosensor. Also catalyzes the transfer of sulfur to the sulfur carrier protein ThiS, forming ThiS-thiocarboxylate. This is a step in the synthesis of thiazole, in the thiamine biosynthesis pathway. The sulfur is donated as persulfide by IscS. The polypeptide is tRNA sulfurtransferase (Escherichia fergusonii (strain ATCC 35469 / DSM 13698 / CCUG 18766 / IAM 14443 / JCM 21226 / LMG 7866 / NBRC 102419 / NCTC 12128 / CDC 0568-73)).